Reading from the N-terminus, the 529-residue chain is MQQRRPVRRALLSVSDKAGIVEFAQALSARGVELLSTGGTARLLAEKGLPVTEVSDYTGFPEMMDGRVKTLHPKVHGGILGRRGQDDAIMEEHQIQPIDMVVVNLYPFAQTVAREGCSLEDAVENIDIGGPTMVRSAAKNHKDVAIVVKSSDYDAIIKEMDDNEGSLTLATRFDLAIKAFEHTAAYDSMIANYFGSMVPAYHGESKEAAGRFPRTLNLNFIKKQDMRYGENSHQQAAFYIEENVKEASVATATQVQGKALSYNNIADTDAALECVKEFAEPACVIVKHANPCGVAIGNSILDAYDRAYKTDPTSAFGGIIAFNRELDAETAQAIISRQFVEVIIAPSASEEALKITAAKQNVRVLTCGQWGERVPGLDFKRVNGGLLVQDRDLGMVGAEELRVVTKRQPTEQELRDALFCWKVAKFVKSNAIVYAKNNMTIGIGAGQMSRVYSAKIAGIKAADEGLEVKGSSMASDAFFPFRDGIDAAAAAGVTCVIQPGGSIRDDEVIAAADEHGIAMLFTDMRHFRH.

In terms of domain architecture, MGS-like spans 1-148; it reads MQQRRPVRRA…KNHKDVAIVV (148 aa). Lys-287 is modified (N6-acetyllysine).

It belongs to the PurH family.

The enzyme catalyses (6R)-10-formyltetrahydrofolate + 5-amino-1-(5-phospho-beta-D-ribosyl)imidazole-4-carboxamide = 5-formamido-1-(5-phospho-D-ribosyl)imidazole-4-carboxamide + (6S)-5,6,7,8-tetrahydrofolate. The catalysed reaction is IMP + H2O = 5-formamido-1-(5-phospho-D-ribosyl)imidazole-4-carboxamide. It functions in the pathway purine metabolism; IMP biosynthesis via de novo pathway; 5-formamido-1-(5-phospho-D-ribosyl)imidazole-4-carboxamide from 5-amino-1-(5-phospho-D-ribosyl)imidazole-4-carboxamide (10-formyl THF route): step 1/1. The protein operates within purine metabolism; IMP biosynthesis via de novo pathway; IMP from 5-formamido-1-(5-phospho-D-ribosyl)imidazole-4-carboxamide: step 1/1. The sequence is that of Bifunctional purine biosynthesis protein PurH from Escherichia coli O157:H7.